We begin with the raw amino-acid sequence, 972 residues long: mRNA transport regulator MTR10 (972 aa).

Its subcellular location is the nucleus. In terms of biological role, involved in mRNA transport from nucleus to cytoplasm. This is mRNA transport regulator MTR10 (MTR10) from Saccharomyces cerevisiae (strain ATCC 204508 / S288c) (Baker's yeast).